A 683-amino-acid polypeptide reads, in one-letter code: Probable metal-nicotianamine transporter YSL3 (683 aa).

Helical transmembrane passes span 29-49 (LVTP…CFVG), 58-78 (IVPA…KWLI), 97-117 (MFLL…GFAT), 142-162 (HVPI…GVLI), 204-224 (VATI…QWFY), 265-285 (IVNF…YPFL), 309-329 (VFIS…TLIT), 372-392 (IPIP…TIAI), 404-424 (LAVL…ATGL), 448-468 (PGAV…LHIS), 490-510 (TGQI…FLAF), 553-573 (CMTF…VVLV), 595-615 (FFAG…LLAW), and 628-648 (SAVA…SALL).

Belongs to the YSL (TC 2.A.67.2) family.

The protein resides in the membrane. Its function is as follows. May be involved in the transport of nicotianamine-chelated metals. This chain is Probable metal-nicotianamine transporter YSL3 (YSL3), found in Oryza sativa subsp. japonica (Rice).